Reading from the N-terminus, the 173-residue chain is Bifunctional protein PyrR (173 aa).

A PRPP-binding motif is present at residues 93-105; that stretch reads VILVDDVLYTGRT.

The protein belongs to the purine/pyrimidine phosphoribosyltransferase family. PyrR subfamily. As to quaternary structure, homodimer and homohexamer; in equilibrium.

It carries out the reaction UMP + diphosphate = 5-phospho-alpha-D-ribose 1-diphosphate + uracil. In terms of biological role, regulates transcriptional attenuation of the pyrimidine nucleotide (pyr) operon by binding in a uridine-dependent manner to specific sites on pyr mRNA. This disrupts an antiterminator hairpin in the RNA and favors formation of a downstream transcription terminator, leading to a reduced expression of downstream genes. Its function is as follows. Also displays a weak uracil phosphoribosyltransferase activity which is not physiologically significant. The chain is Bifunctional protein PyrR from Streptococcus thermophilus (strain ATCC BAA-491 / LMD-9).